Here is a 372-residue protein sequence, read N- to C-terminus: ATP-sensitive inward rectifier potassium channel 1 (372 aa).

The Cytoplasmic portion of the chain corresponds to 1-58; the sequence is MFKHLRRWFVTHIFGRSRQRARLVSKDGRCNIEFGNVDAQSRFIFFVDIWTTVLDLKW. S25 carries the phosphoserine; by SGK1 modification. A helical membrane pass occupies residues 59–83; the sequence is RYKMTVFITAFLGSWFLFGLLWYVV. The Extracellular segment spans residues 84 to 108; sequence AYVHKDLPEFYPPDNRTPCVENING. N-linked (GlcNAc...) asparagine glycosylation is present at N98. The helical; Pore-forming intramembrane region spans 109 to 120; sequence MTSAFLFSLETQ. An intramembrane region (pore-forming) is located at residues 121-127; that stretch reads VTIGYGF. Positions 122–127 match the Selectivity filter motif; sequence TIGYGF. Over 128 to 136 the chain is Extracellular; the sequence is RFVTEQCAT. Residues 137–158 form a helical membrane-spanning segment; that stretch reads AIFLLIFQSILGVIINSFMCGA. At 159 to 372 the chain is on the cytoplasmic side; the sequence is ILAKISRPKK…EVDETDDTQM (214 aa). The segment at 161–188 is polyphosphoinositide (PIP2)-binding; it reads AKISRPKKRAKTITFSKNAVISKRGGKL. 204-211 contacts ATP; the sequence is GSHIYGKL.

Belongs to the inward rectifier-type potassium channel (TC 1.A.2.1) family. KCNJ1 subfamily. Interacts with SGK1 and SLC9A3R2/NHERF2. Post-translationally, phosphorylation at Ser-25 by SGK1 is necessary for its expression at the cell membrane.

It localises to the cell membrane. It carries out the reaction K(+)(in) = K(+)(out). Its activity is regulated as follows. Inhibited by WNK3. Activated by phosphatidylinositol 4,5 biphosphate (PtdIns(4,5)P2). Inward rectifier potassium channels are characterized by a greater tendency to allow potassium to flow into the cell rather than out of it. Their voltage dependence is regulated by the concentration of extracellular potassium; as external potassium is raised, the voltage range of the channel opening shifts to more positive voltages. The inward rectification is mainly due to the blockage of outward current by internal magnesium. This channel is activated by internal ATP and can be blocked by external barium. In the kidney, probably plays a major role in potassium homeostasis. This is ATP-sensitive inward rectifier potassium channel 1 (Kcnj1) from Mus musculus (Mouse).